The chain runs to 1687 residues: MRVLVLALTVALVAGNQVSYAPEFAPGKTYEYKYEGYILGGLPEEGLAKAGVKIQSKVLIGAAGPDSYILKLEDPVISGYSGIWPKEVFHPATKLTSALSAQLLTPVKFEYANGVIGKVFAPPGISTNVLNVFRGLLNMFQMNIKKTQNVYDLQETGVKGVCKTHYILHEDSKADRLHLTKTTDLNHCTDSIHMDVGMAGYTEKCAECMARGKTLSGAISVNYIMKPSASGTLILEATATELLQYSPVNIVNGAVQMEAKQTVTFVDIRKTPLEPLKADYIPRGSLKYELGTEFLQTPIQLLRITNVEAQIVESLNNLVSLNMGHAHEDSPLKFIELIQLLRVAKYESIEALWSQFKTKIDHRHWLLSSIPAIGTHVALKFIKEKIVAGEVTAAEAAQAIMSSTHLVKADLEAIKLQEGLAVTPNIRENAGLRELVMLGFGIMVHKYCVENPSCPSELVRPVHDIIAKALEKRDNDELSLALKVLGNAGHPSSLKPIMKLLPGFGSSASELELRVHIDATLALRKIGKREPKMIQDVALQLFMDRTLDPELRMVAVVVLFDTKLPMGLITTLAQSLLKEPNLQVLSFVYSYMKAFTKTTTPDHSTVAAACNVAIRILSPRFERLSYRYSRAFHYDHYHNPWMLGAAASAFYINDAATVLPKNIMAKARVYLSGVSVDVLEFGARAEGVQEALLKARDVPESADRLTKMKQALKALTEWRANPSRQPLGSLYVKVLGQDVAFANIDKEMVEKIIEFATGPEIRTRGKKALDALLSGYSMKYSKPMSAIEVRHIFPTSLGLPMELSLYTAAVTAASVEVQATISPPLPEDFHPAHLLKSDISMKASVTPSVSLHTYGVMGVNSPFIQASVLSRAKDHAALPKKMEARLDIVKGYFSYQFLPVEGVKTIASARLETVAIARDVEGLAAAKVTPVVPYEPIVSKNATLNLSQMSYYLNDSISASSELLPFSLQRQTGKNKIPKPIVKKMCATTYTYGIEGCVDIWSRNATFLRNTPIYAIIGNHSLLVNVTPAAGPSIERIEIEVQFGEQAAEKILKEVYLNEEEEVLEDKNVLMKLKKILSPGLKNSTKASSSSSGSSRSSRSRSSSSSSSSSSSSSSRSSSSSSRSSSSLRRNSKMLDLADPLNITSKRSSSSSSSSSSSSSSSSSSSSSSKTKWQLHERNFTKDHIHQHSVSKERLNSKSSASSFESIYNKITYLSNIVSPVVTVLVRAIRADHKNQGYQIAVYYDKLTTRVQIIVANLTEDDNWRICSDSMMLSHHKVMTRVTWGIGCKQYNTTIVAETGRVEKEPAVRVKLAWARLPTYIRDYARRVSRYISRVAEDNGVNRTKVASKPKEIKLTVAVANETSLNVTLNTPKNTFFKLGWVLPFYLPINNTAAELQAFQGRWMDQVTYMLTKSAAAECTVVEDTVVTFNNRKYKTETPHSCHQVLAQDCTSEIKFIVLLKRDQTAERNEISIKIENIDVDMYPKDNAVVVKVNGVEIPLTNLPYQHPTGNIQIRQREEGISLHAPSHGLQEVFLSLNKVQVKVVDWMRGQTCGLCGKADGEVRQEYSTPNERVSRNATSFAHSWVLPAKSCRDASECYMQLESVKLEKQISLEGEESKCYSVEPVWRCLPGCAPVRTTSVTVGLPCVSLDSNLNRSDSLSSIYQKSVDVSETAESHLACRCTPQCA.

Residues 1 to 15 (MRVLVLALTVALVAG) form the signal peptide. The Vitellogenin domain maps to 24–663 (FAPGKTYEYK…DAATVLPKNI (640 aa)). 6 N-linked (GlcNAc...) asparagine glycosylation sites follow: asparagine 941, asparagine 945, asparagine 954, asparagine 1004, asparagine 1019, and asparagine 1083. The interval 1081 to 1174 (LKNSTKASSS…SSSSSKTKWQ (94 aa)) is disordered. Positions 1088–1127 (SSSSSGSSRSSRSRSSSSSSSSSSSSSSRSSSSSSRSSSS) are enriched in low complexity. N-linked (GlcNAc...) asparagine glycosylation occurs at asparagine 1142. Over residues 1148 to 1169 (SSSSSSSSSSSSSSSSSSSSSS) the composition is skewed to low complexity. Residues asparagine 1179, asparagine 1257, asparagine 1292, asparagine 1342, asparagine 1361, asparagine 1366, and asparagine 1390 are each glycosylated (N-linked (GlcNAc...) asparagine). The region spanning 1417–1593 (AECTVVEDTV…SWVLPAKSCR (177 aa)) is the VWFD domain. 2 cysteine pairs are disulfide-bonded: cysteine 1419-cysteine 1556 and cysteine 1442-cysteine 1592. 2 N-linked (GlcNAc...) asparagine glycosylation sites follow: asparagine 1577 and asparagine 1655.

In terms of processing, phosvitin, an egg yolk storage protein, is one of the most highly phosphorylated (10%) proteins in nature. As to expression, produced by the liver, secreted into the blood and then sequestered by receptor mediated endocytosis into growing oocytes, where it is generally cleaved, giving rise to the respective yolk components lipovitellins and phosvitin.

Its function is as follows. Precursor of the egg-yolk proteins that are sources of nutrients during early development of oviparous organisms. In Fundulus heteroclitus (Killifish), this protein is Vitellogenin-2.